Consider the following 99-residue polypeptide: MLAVVEQGSKQYLVRKGQVISVEKISAEPGKEVEISCVKCVLDEEARPHFGVGTVKAKVLAQERGEKLVIFKKRRRKNSRRRNGHRQYVTILRVTDVTL.

This sequence belongs to the bacterial ribosomal protein bL21 family. As to quaternary structure, part of the 50S ribosomal subunit. Contacts protein L20.

Its function is as follows. This protein binds to 23S rRNA in the presence of protein L20. This is Large ribosomal subunit protein bL21 from Neorickettsia sennetsu (strain ATCC VR-367 / Miyayama) (Ehrlichia sennetsu).